The primary structure comprises 624 residues: Vitamin B12 transporter BtuB (624 aa).

The signal sequence occupies residues 1-21 (MTIKKYTLLTALSVTAFSGWA). The short motif at 31-38 (NEMVVTAN) is the TonB box element. One can recognise a TBDR plug domain in the interval 43-157 (PKSSVLAPVD…IGGVVNIITE (115 aa)). Residues L88, S90, N97, and 115-116 (IS) each bind cyanocob(III)alamin. Residues 160–624 (TLGSTLTAGL…EYYFTGSYNF (465 aa)) enclose the TBDR beta-barrel domain. Transmembrane regions (beta stranded) follow at residues 163 to 170 (STLTAGLG), 174 to 183 (YQNYNGSTQQ), and 189 to 200 (TTITLAGNYDYS). 4 residues coordinate Ca(2+): D204, Q216, D218, and D220. The next 2 beta stranded transmembrane spans lie at 222-232 (YLGKMLWLGAN) and 237-253 (EQFSGFVRGYGFDNRSD). Positions 254, 255, and 266 each coordinate Ca(2+). Beta stranded transmembrane passes span 268-282 (RSLSSRTYDTGINFS), 284-301 (GGYASQLIGSYSRTQDYN), 314-330 (TLDDISQYNLQWTNTYQ), 333-342 (LGNVGGGLDW), 358-374 (YEQRNTGVYGTVQQFVG), 376-386 (VTLEGAIRGDD), 390-405 (FGWHTTWQSSAGWEFV), 408-422 (YRLIGSYGTAFKAPN), 440-449 (ESTQWEAAIT), 455-464 (LDWRLSAYRN), 481-498 (YYNVEKATIKGVEWTGSF), 502-517 (PLSHQVTLEYLDPRNA), 525-537 (RRAKQQVKYQLDW), 543-557 (DWSVTYQYIGQRYDS), 568-582 (PVKLAGISLWDLAVS), 595-606 (IANLFDKDYEMV), and 612-624 (PGREYYFTGSYNF). Residue T314 participates in cyanocob(III)alamin binding. R525 is a cyanocob(III)alamin binding site. The TonB C-terminal box motif lies at 607–624 (YGYQTPGREYYFTGSYNF).

Belongs to the TonB-dependent receptor family. BtuB (TC 1.B.14.3.1) subfamily.

The protein resides in the cell outer membrane. Involved in the active translocation of vitamin B12 (cyanocobalamin) across the outer membrane to the periplasmic space. It derives its energy for transport by interacting with the trans-periplasmic membrane protein TonB. This chain is Vitamin B12 transporter BtuB, found in Yersinia pseudotuberculosis serotype O:1b (strain IP 31758).